The primary structure comprises 597 residues: MSILQKLENSAAAAVKALYGTDPMEGQIQLQKTKREFKGHLTLVVFPFVKMSRKSPEATATEIGEWLLANESAVSAIEVVKGFLNLTIAPRVWLELLNEIRADINFGHKVATEDSPLVMVEYSSPNTNKPLHLGHVRNNLLGYSLSEIMKANGYRVVKTNIVNDRGIHICKSMLAWQKWGDGVTPEKAGKKGDHLIGDFYVLFDKHYKAELNSLMAEGKSKEEAEAASTLMAEAREMLRLWEAGDEKVVDLWRTMNQWVYDGFEATYKMMGVDFDKIYYESETYLVGKEEVLRGLEEGLFVKHSDGSVWADLTKDGLDEKLLLRADGTSVYMTQDIGTAKMRFNDYPINRMIYVVGNEQNYHFQVLSILLDRLGFEFGKGLVHFSYGMVELPEGKMKSREGTVVDADDLMDEMIRTAAEIAAEAGKAAEKDEEESREVARIVGLGSLKYFILKVDPRKNMTFNPKESIDFNGNTGSFVQYTYARIRSLMRRAEAAGYDIPSQLPTDLPLSEKEEALIQKVSEYAEVVSEAGRSYSPALIANYIYDLVKEYNQFYHDFSVLKEEDERIRAFRLALSEVVALTMRKGFALLGIEMPERM.

Positions 125 to 135 (PNTNKPLHLGH) match the 'HIGH' region motif.

It belongs to the class-I aminoacyl-tRNA synthetase family. In terms of assembly, monomer.

It localises to the cytoplasm. The enzyme catalyses tRNA(Arg) + L-arginine + ATP = L-arginyl-tRNA(Arg) + AMP + diphosphate. This is Arginine--tRNA ligase from Porphyromonas gingivalis (strain ATCC 33277 / DSM 20709 / CIP 103683 / JCM 12257 / NCTC 11834 / 2561).